We begin with the raw amino-acid sequence, 559 residues long: Probable D-2-hydroxyglutarate dehydrogenase, mitochondrial (559 aa).

The transit peptide at 1-80 (MARRAAAGLL…MNFEVQKRSF (80 aa)) directs the protein to the mitochondrion. The region spanning 131-310 (YKGSSQLLLL…TKIAILTPAK (180 aa)) is the FAD-binding PCMH-type domain.

Belongs to the FAD-binding oxidoreductase/transferase type 4 family. Homodimer. It depends on FAD as a cofactor.

It localises to the mitochondrion. It catalyses the reaction (R)-2-hydroxyglutarate + A = 2-oxoglutarate + AH2. Its function is as follows. Catalyzes the oxidation of D-2-hydroxyglutarate to alpha-ketoglutarate. This chain is Probable D-2-hydroxyglutarate dehydrogenase, mitochondrial (D2HGDH), found in Oryza sativa subsp. japonica (Rice).